We begin with the raw amino-acid sequence, 293 residues long: Histamine N-methyltransferase A (293 aa).

Substrate is bound at residue glutamate 28. Glycine 60, glutamate 89, glutamine 94, serine 120, and isoleucine 142 together coordinate S-adenosyl-L-methionine. Asparagine 283 is a substrate binding site.

This sequence belongs to the class I-like SAM-binding methyltransferase superfamily. HNMT family. Monomer.

It is found in the cytoplasm. It catalyses the reaction histamine + S-adenosyl-L-methionine = N(tau)-methylhistamine + S-adenosyl-L-homocysteine + H(+). Functionally, inactivates histamine by N-methylation. Plays an important role in degrading histamine and in regulating the airway response to histamine. This is Histamine N-methyltransferase A (hnmt-a) from Xenopus laevis (African clawed frog).